A 690-amino-acid polypeptide reads, in one-letter code: Elongation factor G (690 aa).

A tr-type G domain is found at 8-283 (EDYRNFGIMA…AVVDYLPSPI (276 aa)). GTP contacts are provided by residues 17 to 24 (AHIDAGKT), 81 to 85 (DTPGH), and 135 to 138 (NKMD).

It belongs to the TRAFAC class translation factor GTPase superfamily. Classic translation factor GTPase family. EF-G/EF-2 subfamily.

It localises to the cytoplasm. Functionally, catalyzes the GTP-dependent ribosomal translocation step during translation elongation. During this step, the ribosome changes from the pre-translocational (PRE) to the post-translocational (POST) state as the newly formed A-site-bound peptidyl-tRNA and P-site-bound deacylated tRNA move to the P and E sites, respectively. Catalyzes the coordinated movement of the two tRNA molecules, the mRNA and conformational changes in the ribosome. The sequence is that of Elongation factor G from Bradyrhizobium diazoefficiens (strain JCM 10833 / BCRC 13528 / IAM 13628 / NBRC 14792 / USDA 110).